The primary structure comprises 660 residues: Junctophilin-1 (660 aa).

At 1 to 638 (MTGGRFDFDD…EKEANSGPNS (638 aa)) the chain is on the cytoplasmic side. 5 MORN repeats span residues 14-36 (YCGG…KGQG), 38-59 (YSGS…SGNT), 60-82 (YQGY…KWMY), 106-128 (YEGT…DGGT), and 129-151 (YQGQ…PYGM). A phosphoserine mark is found at S157, S216, and S220. Residues 228 to 247 (SKSSISSKRSSVRSDAAMSR) form a disordered region. MORN repeat units lie at residues 281-303 (YMGE…NGMK) and 304-326 (YEGE…DGSK). Residues 437-454 (NPEEKVLEKPPSPKESPH) are compositionally biased toward basic and acidic residues. Positions 437 to 631 (NPEEKVLEKP…NDTCPSLEKE (195 aa)) are disordered. S452 bears the Phosphoserine mark. Phosphothreonine is present on T461. Residues S465, S469, and S475 each carry the phosphoserine modification. Residues 466-477 (PESSPKQSHSPQ) show a composition bias toward low complexity. 2 stretches are compositionally biased toward basic and acidic residues: residues 562–571 (PPEDREDDRG) and 598–612 (VAKE…KKSE). The helical; Anchor for type IV membrane protein transmembrane segment at 639-659 (IMIVLVMLLNIGLAILFVHFL) threads the bilayer.

It belongs to the junctophilin family. Specifically expressed in skeletal muscle. Weakly expressed in embryos and neonates. Abundant in young adult muscles.

The protein localises to the cell membrane. It is found in the endoplasmic reticulum membrane. It localises to the sarcoplasmic reticulum membrane. In terms of biological role, junctophilins contribute to the formation of junctional membrane complexes (JMCs) which link the plasma membrane with the endoplasmic or sarcoplasmic reticulum in excitable cells. Provides a structural foundation for functional cross-talk between the cell surface and intracellular calcium release channels. JPH1 contributes to the construction of the skeletal muscle triad by linking the t-tubule (transverse-tubule) and SR (sarcoplasmic reticulum) membranes. In Mus musculus (Mouse), this protein is Junctophilin-1 (Jph1).